The chain runs to 152 residues: Large-conductance mechanosensitive channel (152 aa).

Transmembrane regions (helical) follow at residues Val-26–Ala-46, Ile-50–Thr-70, and Ile-92–Leu-112.

The protein belongs to the MscL family. Homopentamer.

It is found in the cell inner membrane. In terms of biological role, channel that opens in response to stretch forces in the membrane lipid bilayer. May participate in the regulation of osmotic pressure changes within the cell. This Gluconobacter oxydans (strain 621H) (Gluconobacter suboxydans) protein is Large-conductance mechanosensitive channel.